A 381-amino-acid polypeptide reads, in one-letter code: Phospholipid scramblase family protein C343.06c (381 aa).

Residues 336 to 369 form a disordered region; it reads QEILKNDQETTPSTNDSSSETKSPFLSDADLDQQ. Positions 344–359 are enriched in polar residues; the sequence is ETTPSTNDSSSETKSP.

The protein belongs to the phospholipid scramblase family.

The protein localises to the mitochondrion. In Schizosaccharomyces pombe (strain 972 / ATCC 24843) (Fission yeast), this protein is Phospholipid scramblase family protein C343.06c.